The sequence spans 170 residues: Calcineurin subunit B type 1 (170 aa).

4 EF-hand domains span residues 18-46 (DEIRRLGKRFRKLDLDNSGALSIDEFMSL), 50-85 (QQNPLVQRVIDIFDADGNGEVDFKEFIQGVSQFSVR), 87-122 (DKLSKLRFAFRIYDMDNDGYISNGELFQVLKMMVGN), and 128-163 (QLQQIVDKTICFADKDEDGKISFDEFCSVVGNTDIH). Ca(2+)-binding residues include D31, D33, S35, E42, D63, D65, N67, E69, E74, D100, D102, D104, Y106, E111, D141, D143, D145, K147, and E152.

It belongs to the calcineurin regulatory subunit family. Composed of two components (A and B), the A component is the catalytic subunit and the B component confers calcium sensitivity.

Its function is as follows. Calcineurin is a calcium-binding and calmodulin-binding protein found in all cells from yeast to mammals, and a calcium-dependent, calmodulin-stimulated protein phosphatase. This Drosophila melanogaster (Fruit fly) protein is Calcineurin subunit B type 1 (CanB).